The following is a 20-amino-acid chain: 2-oxo-acid reductase (20 aa).

It belongs to the AOR/FOR family. As to quaternary structure, forms various types of homooligomers. [4Fe-4S] cluster serves as cofactor. Requires Mo-molybdopterin as cofactor.

Its subcellular location is the cell membrane. It carries out the reaction a (2R)-2-hydroxycarboxylate + A = a 2-oxocarboxylate + AH2. Is inhibited by cyanide. Is sensitive to oxygen. Its function is as follows. Oxidoreductase with an extremely broad substrate specificity that can reduce reversibly 2-oxocarboxylates to (2R)-hydroxycarboxylates. The protein is 2-oxo-acid reductase of Proteus hauseri.